The sequence spans 92 residues: Large ribosomal subunit protein bL28 (92 aa).

This sequence belongs to the bacterial ribosomal protein bL28 family.

The sequence is that of Large ribosomal subunit protein bL28 from Borrelia garinii subsp. bavariensis (strain ATCC BAA-2496 / DSM 23469 / PBi) (Borreliella bavariensis).